The primary structure comprises 142 residues: Complexin (142 aa).

Disordered stretches follow at residues 13–70 (QLSA…MRQD) and 83–105 (IVEA…PEEL). The stretch at 29–138 (GDDKEKAEEE…NELKTQIEGK (110 aa)) forms a coiled coil. Residues 31 to 70 (DKEKAEEEERERQEAIKEAEDRRKEKHRKMEEEREKMRQD) show a composition bias toward basic and acidic residues. The residue at position 139 (C139) is a Cysteine methyl ester. C139 is lipidated: S-farnesyl cysteine. The propeptide at 140–142 (VMQ) is removed in mature form.

Belongs to the complexin/synaphin family. In terms of assembly, binds to the SNARE core complex containing Snap25, synaptobrevin and Syx1A.

Its subcellular location is the membrane. In terms of biological role, positively regulates a late step in synaptic vesicle exocytosis. The sequence is that of Complexin (cpx) from Drosophila melanogaster (Fruit fly).